A 66-amino-acid polypeptide reads, in one-letter code: Ocellatin-PT5 (66 aa).

Positions 1–22 (MAFLKKSLFLVLFLGLVSLSIC) are cleaved as a signal peptide. Residues 23-39 (DEEKRQDEDDDDDDDEE) constitute a propeptide that is removed on maturation. Val-66 bears the Valine amide mark.

In terms of tissue distribution, expressed by the skin glands.

Its subcellular location is the secreted. Its function is as follows. Has antibacterial activity against Gram-negative bacterium E.coli ATCC 25922 (MIC=300 uM) but not against S.pneumoniae ATCC 700603, S.choleraesuis ATCC 14028 or Gram-positive bacterium S.aureus ATCC 29313. Shows very little hemolytic activity and no cytotoxicity. In Leptodactylus pustulatus (Ceara white-lipped frog), this protein is Ocellatin-PT5.